The primary structure comprises 232 residues: Transcriptional regulatory protein CpxR (232 aa).

In terms of domain architecture, Response regulatory spans 3–115 (KILLVDDDRE…ELVARIRAIL (113 aa)). Position 51 is a 4-aspartylphosphate (aspartate 51). A DNA-binding region (ompR/PhoB-type) is located at residues 131–230 (SPTLEVDALV…LRGRGYLMVS (100 aa)).

Phosphorylated by CpxA.

It is found in the cytoplasm. Its function is as follows. Member of the two-component regulatory system CpxA/CpxR. This system combats a variety of extracytoplasmic protein-mediated toxicities. It performs this function by increasing the synthesis of the periplasmic protease, DegP as well as that of CpxP protein. In Escherichia coli O157:H7, this protein is Transcriptional regulatory protein CpxR (cpxR).